The chain runs to 789 residues: Ribosomal protein S6 kinase alpha-5 (789 aa).

A Protein kinase 1 domain is found at 39-308; it reads FELLKVLGTG…ADEIKQHPFF (270 aa). ATP is bound by residues 45-53 and K71; that span reads LGTGAYGKV. The active-site Proton acceptor is D167. S202 carries the post-translational modification Phosphoserine; by autocatalysis. The region spanning 309–377 is the AGC-kinase C-terminal domain; that stretch reads QNINWDDLAA…VAPSILFKRN (69 aa). S350 carries the post-translational modification Phosphoserine. Residues S366 and S371 each carry the phosphoserine; by autocatalysis modification. The Protein kinase 2 domain maps to 416–677; that stretch reads DLKEKPLGEG…MSSLRYNEWL (262 aa). Residues 422–430 and K445 each bind ATP; that span reads LGEGSFSIC. Residue D534 is the Proton acceptor of the active site. T571 and T690 each carry phosphothreonine. The interval 731–789 is disordered; it reads AKRRKMKKTSTSTETRSSSSESSHSSSSHSHGKTTPTKTLQPTNPTDSNNPETIFQFSD. Positions 739-769 are enriched in low complexity; the sequence is TSTSTETRSSSSESSHSSSSHSHGKTTPTKT. Phosphoserine; by autocatalysis is present on residues S740, S742, and S748. Over residues 770 to 789 the composition is skewed to polar residues; that stretch reads LQPTNPTDSNNPETIFQFSD.

It belongs to the protein kinase superfamily. AGC Ser/Thr protein kinase family. S6 kinase subfamily. Mg(2+) is required as a cofactor. In terms of processing, ser-366 and Thr-571 phosphorylation is required for kinase activity. Ser-366 and Ser-202 are autophosphorylated by the C-terminal kinase domain, and their phosphorylation is essential for the catalytic activity of the N-terminal kinase domain. Phosphorylated at Ser-350, Thr-571 and Thr-690 by MAP kinases. Autophosphorylated at Ser-740, Ser-742 and Ser-748 by the N-terminal kinase domain. In terms of tissue distribution, widely expressed with high levels in heart, brain and placenta. Less abundant in lung, kidney and liver.

It is found in the nucleus. It carries out the reaction L-seryl-[protein] + ATP = O-phospho-L-seryl-[protein] + ADP + H(+). It catalyses the reaction L-threonyl-[protein] + ATP = O-phospho-L-threonyl-[protein] + ADP + H(+). Activated by phosphorylation at Ser-350, Thr-571 and Thr-690 by MAP kinases, and by further autophosphorylation of Ser-202, Ser-366 and Ser-371 by the activated C-terminal kinase domain. The active N-terminal kinase domain finally phosphorylates downstream substrates, as well as Ser-740, Ser-742 and Ser-748 in its own C-terminal region. In terms of biological role, serine/threonine-protein kinase that is required for the mitogen or stress-induced phosphorylation of the transcription factors CREB1 and ATF1 and that contributes to gene activation by histone phosphorylation. Phosphorylates CREB1 and ATF1 in response to mitogenic or stress stimuli such as UV-C irradiation, epidermal growth factor (EGF) and anisomycin. Directly represses transcription via phosphorylation of 'Ser-1' of histone H2A. Phosphorylates 'Ser-10' of histone H3 in response to mitogenics, stress stimuli and EGF, which results in the transcriptional activation of several immediate early genes, including proto-oncogenes c-fos/FOS and c-jun/JUN. May also phosphorylate 'Ser-28' of histone H3. Mediates the mitogen- and stress-induced phosphorylation of high mobility group protein 1 (HMGN1/HMG14). In Gallus gallus (Chicken), this protein is Ribosomal protein S6 kinase alpha-5 (RPS6KA5).